A 70-amino-acid chain; its full sequence is Large ribosomal subunit protein bL31 (70 aa).

Zn(2+) contacts are provided by C16, C18, C37, and C40.

Belongs to the bacterial ribosomal protein bL31 family. Type A subfamily. In terms of assembly, part of the 50S ribosomal subunit. Zn(2+) serves as cofactor.

Functionally, binds the 23S rRNA. The protein is Large ribosomal subunit protein bL31 of Shewanella halifaxensis (strain HAW-EB4).